We begin with the raw amino-acid sequence, 382 residues long: Gap junction alpha-1 protein (382 aa).

The Cytoplasmic portion of the chain corresponds to 2 to 23 (GDWSALGKLLDKVQAYSTAGGK). S5 is subject to Phosphoserine. Residues 24–44 (VWLSVLFIFRILLLGTAVESA) form a helical membrane-spanning segment. Residues 45 to 76 (WGDEQSAFRCNTQQPGCENVCYDKSFPISHVR) lie on the Extracellular side of the membrane. 2 disulfide bridges follow: C54–C192 and C187–C198. A helical transmembrane segment spans residues 77 to 97 (FWVLQIIFVSVPTLLYLAHVF). At 98–155 (YVMRKEEKLNKKEEELKVAQTDGVNVEMHLKQIEIKKFKYGIEEHGKVKMRGGLLRTY) the chain is on the cytoplasmic side. K144 participates in a covalent cross-link: Glycyl lysine isopeptide (Lys-Gly) (interchain with G-Cter in SUMO). Residues 156 to 176 (IISILFKSVFEVAFLLIQWYI) traverse the membrane as a helical segment. Residues 177–207 (YGFSLSAVYTCKRDPCPHQVDCFLSRPTEKT) lie on the Extracellular side of the membrane. Residues 208 to 228 (IFIIFMLVVSLVSLALNIIEL) traverse the membrane as a helical segment. The Cytoplasmic segment spans residues 229 to 382 (FYVFFKGVKD…SRPRPDDLEI (154 aa)). K237 is covalently cross-linked (Glycyl lysine isopeptide (Lys-Gly) (interchain with G-Cter in SUMO)). Residues 244-382 (SDPYHATTGP…SRPRPDDLEI (139 aa)) are interaction with NOV. Y247 is modified (phosphotyrosine). Phosphoserine occurs at positions 255, 257, and 262. The tract at residues 264-382 (KYAYFNGCSS…SRPRPDDLEI (119 aa)) is interaction with UBQLN4. At C271 the chain carries S-nitrosocysteine. At T275 the chain carries Phosphothreonine. 3 positions are modified to phosphoserine: S306, S314, and S325. The segment covering 317 to 332 (QNRMGQAGSTISNSHA) has biased composition (polar residues). Residues 317–382 (QNRMGQAGST…SRPRPDDLEI (66 aa)) are disordered. Position 326 is a phosphothreonine (T326). 3 positions are modified to phosphoserine: S328, S330, and S365. Residues 362–374 (RPSSRASSRASSR) show a composition bias toward low complexity. A Phosphoserine; by PKC/PRKCG and PKC/PRKCD modification is found at S368. Phosphoserine occurs at positions 369 and 373.

The protein belongs to the connexin family. Alpha-type (group II) subfamily. In terms of assembly, a connexon is composed of a hexamer of connexins. Interacts with SGSM3. Interacts with RIC1/CIP150. Interacts with CNST and CSNK1D. Interacts (via C-terminus) with TJP1. Interacts (via C-terminus) with SRC (via SH3 domain). Interacts (not ubiquitinated) with UBQLN4 (via UBA domain). Interacts with NOV. Interacts with TMEM65. Interacts with ANK3/ANKG and PKP2. Post-translationally, contains at least one intramolecular disulfide bond. In terms of processing, phosphorylation at Ser-325, Ser-328 and Ser-330 by CK1 modulates gap junction assembly. Phosphorylated at Ser-368 by PRKCG; phosphorylation induces disassembly of gap junction plaques and inhibition of gap junction activity. Phosphorylation at Ser-368 by PRKCD triggers its internalization into small vesicles leading to proteasome-mediated degradation. Sumoylated with SUMO1, SUMO2 and SUMO3, which may regulate the level of functional Cx43 gap junctions at the plasma membrane. May be desumoylated by SENP1 or SENP2. Post-translationally, S-nitrosylation at Cys-271 is enriched at the muscle endothelial gap junction in arteries, it augments channel permeability and may regulate of smooth muscle cell to endothelial cell communication. In terms of processing, acetylated in the developing cortex; leading to delocalization from the cell membrane. In terms of tissue distribution, detected in ventricle and atrium (at protein level).

It is found in the cell membrane. The protein localises to the cell junction. Its subcellular location is the gap junction. The protein resides in the endoplasmic reticulum. In terms of biological role, gap junction protein that acts as a regulator of bladder capacity. A gap junction consists of a cluster of closely packed pairs of transmembrane channels, the connexons, through which materials of low MW diffuse from one cell to a neighboring cell. Negative regulator of bladder functional capacity: acts by enhancing intercellular electrical and chemical transmission, thus sensitizing bladder muscles to cholinergic neural stimuli and causing them to contract. May play a role in cell growth inhibition through the regulation of NOV expression and localization. Plays an essential role in gap junction communication in the ventricles. This Rattus norvegicus (Rat) protein is Gap junction alpha-1 protein (Gja1).